The sequence spans 498 residues: NAD(P)H-quinone oxidoreductase chain 4, chloroplastic (498 aa).

The next 14 helical transmembrane spans lie at 4–24 (FPWL…IVLF), 37–57 (YCIC…HFEL), 80–100 (FGID…TTLA), 112–129 (KLFY…LGTF), 134–154 (ILLF…LLSM), 167–187 (FILY…GMSL), 208–228 (ALEI…SPII), 242–262 (HYST…YGLV), 272–292 (AHSI…IYAA), 305–325 (IAYS…SISE), 330–350 (GAIL…FLAG), 386–406 (LALP…GIIT), 416–436 (ILIT…SLSI), and 463–483 (FISI…DFIF).

This sequence belongs to the complex I subunit 4 family.

Its subcellular location is the plastid. It localises to the chloroplast thylakoid membrane. The enzyme catalyses a plastoquinone + NADH + (n+1) H(+)(in) = a plastoquinol + NAD(+) + n H(+)(out). It catalyses the reaction a plastoquinone + NADPH + (n+1) H(+)(in) = a plastoquinol + NADP(+) + n H(+)(out). This Phaseolus vulgaris (Kidney bean) protein is NAD(P)H-quinone oxidoreductase chain 4, chloroplastic.